We begin with the raw amino-acid sequence, 355 residues long: Phosphoribosylformylglycinamidine cyclo-ligase (355 aa).

This sequence belongs to the AIR synthase family.

The protein resides in the cytoplasm. The catalysed reaction is 2-formamido-N(1)-(5-O-phospho-beta-D-ribosyl)acetamidine + ATP = 5-amino-1-(5-phospho-beta-D-ribosyl)imidazole + ADP + phosphate + H(+). It participates in purine metabolism; IMP biosynthesis via de novo pathway; 5-amino-1-(5-phospho-D-ribosyl)imidazole from N(2)-formyl-N(1)-(5-phospho-D-ribosyl)glycinamide: step 2/2. This chain is Phosphoribosylformylglycinamidine cyclo-ligase, found in Beijerinckia indica subsp. indica (strain ATCC 9039 / DSM 1715 / NCIMB 8712).